The primary structure comprises 314 residues: tRNA dimethylallyltransferase 1 (314 aa).

ATP is bound at residue 8-15; sequence GPTGTGKS. Substrate is bound at residue 10 to 15; it reads TGTGKS.

Belongs to the IPP transferase family. In terms of assembly, monomer. Requires Mg(2+) as cofactor.

It catalyses the reaction adenosine(37) in tRNA + dimethylallyl diphosphate = N(6)-dimethylallyladenosine(37) in tRNA + diphosphate. Catalyzes the transfer of a dimethylallyl group onto the adenine at position 37 in tRNAs that read codons beginning with uridine, leading to the formation of N6-(dimethylallyl)adenosine (i(6)A). This is tRNA dimethylallyltransferase 1 from Mycobacterium marinum (strain ATCC BAA-535 / M).